Consider the following 258-residue polypeptide: Venom plasminogen activator Haly-PA (258 aa).

A signal peptide spans 1 to 18 (MALIRVLANLLILQLSYA). A propeptide spanning residues 19-24 (QKSSEL) is cleaved from the precursor. The Peptidase S1 domain maps to 25-249 (VVGGDECNIN…HLDWIKSIIA (225 aa)). 6 disulfide bridges follow: cysteine 31–cysteine 163, cysteine 50–cysteine 66, cysteine 98–cysteine 256, cysteine 142–cysteine 210, cysteine 174–cysteine 189, and cysteine 200–cysteine 225. A glycan (N-linked (GlcNAc...) asparagine) is linked at asparagine 44. Active-site charge relay system residues include histidine 65 and aspartate 110. The Charge relay system role is filled by serine 204.

It belongs to the peptidase S1 family. Snake venom subfamily. Monomer. Post-translationally, glycosylated. Expressed by the venom gland.

Its subcellular location is the secreted. In terms of biological role, snake venom serine protease that activates plasminogen. Displays indirect fibrino(geno)lytic activity through conversion of plasminogen to plasmin. Shows a preferential cleavage at Arg-|-Xaa instead of Lys-|-Xaa bonds. The sequence is that of Venom plasminogen activator Haly-PA from Gloydius brevicauda (Korean slamosa snake).